A 177-amino-acid chain; its full sequence is Peptide methionine sulfoxide reductase MsrA (177 aa).

Cys15 is an active-site residue.

The protein belongs to the MsrA Met sulfoxide reductase family.

It catalyses the reaction L-methionyl-[protein] + [thioredoxin]-disulfide + H2O = L-methionyl-(S)-S-oxide-[protein] + [thioredoxin]-dithiol. The catalysed reaction is [thioredoxin]-disulfide + L-methionine + H2O = L-methionine (S)-S-oxide + [thioredoxin]-dithiol. Its function is as follows. Has an important function as a repair enzyme for proteins that have been inactivated by oxidation. Catalyzes the reversible oxidation-reduction of methionine sulfoxide in proteins to methionine. The protein is Peptide methionine sulfoxide reductase MsrA of Listeria monocytogenes serotype 4b (strain CLIP80459).